Consider the following 350-residue polypeptide: Protein-glutamate methylesterase/protein-glutamine glutaminase 2 (350 aa).

The Response regulatory domain occupies Arg3–Glu121. Asp54 is subject to 4-aspartylphosphate. A CheB-type methylesterase domain is found at Ile158–Ala322. Active-site residues include Ser170, His197, and Asp290.

It belongs to the CheB family. Post-translationally, phosphorylated by CheA. Phosphorylation of the N-terminal regulatory domain activates the methylesterase activity.

Its subcellular location is the cytoplasm. The enzyme catalyses [protein]-L-glutamate 5-O-methyl ester + H2O = L-glutamyl-[protein] + methanol + H(+). The catalysed reaction is L-glutaminyl-[protein] + H2O = L-glutamyl-[protein] + NH4(+). In terms of biological role, involved in chemotaxis. Part of a chemotaxis signal transduction system that modulates chemotaxis in response to various stimuli. Catalyzes the demethylation of specific methylglutamate residues introduced into the chemoreceptors (methyl-accepting chemotaxis proteins or MCP) by CheR. Also mediates the irreversible deamidation of specific glutamine residues to glutamic acid. In Methanospirillum hungatei JF-1 (strain ATCC 27890 / DSM 864 / NBRC 100397 / JF-1), this protein is Protein-glutamate methylesterase/protein-glutamine glutaminase 2.